We begin with the raw amino-acid sequence, 668 residues long: Fructose-1,6-bisphosphatase class 3 (668 aa).

It belongs to the FBPase class 3 family. The cofactor is Mn(2+).

The catalysed reaction is beta-D-fructose 1,6-bisphosphate + H2O = beta-D-fructose 6-phosphate + phosphate. The protein operates within carbohydrate biosynthesis; gluconeogenesis. The polypeptide is Fructose-1,6-bisphosphatase class 3 (Clostridium botulinum (strain Langeland / NCTC 10281 / Type F)).